The chain runs to 778 residues: Lon protease (778 aa).

The Lon N-terminal domain maps to 4–187; it reads LPVLPLTDAV…LLVGWVRAHL (184 aa). 346–353 serves as a coordination point for ATP; sequence GPPGVGKT. One can recognise a Lon proteolytic domain in the interval 581-762; it reads TAVPGVATGL…ADVLALALRP (182 aa). Residues S668 and K711 contribute to the active site.

This sequence belongs to the peptidase S16 family. As to quaternary structure, homohexamer. Organized in a ring with a central cavity.

The protein resides in the cytoplasm. The enzyme catalyses Hydrolysis of proteins in presence of ATP.. Its function is as follows. ATP-dependent serine protease that mediates the selective degradation of mutant and abnormal proteins as well as certain short-lived regulatory proteins. Required for cellular homeostasis and for survival from DNA damage and developmental changes induced by stress. Degrades polypeptides processively to yield small peptide fragments that are 5 to 10 amino acids long. Binds to DNA in a double-stranded, site-specific manner. In Salinispora arenicola (strain CNS-205), this protein is Lon protease.